Consider the following 229-residue polypeptide: Prolactin (229 aa).

The first 30 residues, 1–30 (MDNKGWSLKGSLLPLLLLVSDLLLCQGVTS), serve as a signal peptide directing secretion. Cys-34 and Cys-41 are disulfide-bonded. Phosphoserine is present on residues Ser-56, Ser-64, and Ser-120. Cystine bridges form between Cys-88–Cys-204 and Cys-221–Cys-229.

This sequence belongs to the somatotropin/prolactin family. Interacts with PRLR.

Its subcellular location is the secreted. Functionally, prolactin acts primarily on the mammary gland by promoting lactation. The polypeptide is Prolactin (PRL) (Neovison vison (American mink)).